Reading from the N-terminus, the 345-residue chain is D-fructose 1,6-bisphosphatase class 2/sedoheptulose 1,7-bisphosphatase (345 aa).

Residues Asp33, Glu57, Asp97, and Glu100 each contribute to the Mn(2+) site. Substrate contacts are provided by residues 100 to 102 (EGT), Tyr131, 176 to 178 (RPR), and 198 to 200 (DGD). Glu225 contributes to the Mn(2+) binding site.

The protein belongs to the FBPase class 2 family. Homotetramer. Mn(2+) serves as cofactor.

The catalysed reaction is beta-D-fructose 1,6-bisphosphate + H2O = beta-D-fructose 6-phosphate + phosphate. It catalyses the reaction D-sedoheptulose 1,7-bisphosphate + H2O = D-sedoheptulose 7-phosphate + phosphate. Its pathway is carbohydrate biosynthesis; Calvin cycle. Its activity is regulated as follows. Inhibited by AMP and slightly innibited by hydrogen peroxyde. Catalyzes the hydrolysis of fructose 1,6-bisphosphate (Fru 1,6-P2) and sedoheptulose 1,7-bisphosphate (Sed 1,7-P2) to fructose 6-phosphate and sedoheptulose 7-phosphate, respectively. The polypeptide is D-fructose 1,6-bisphosphatase class 2/sedoheptulose 1,7-bisphosphatase (Synechococcus elongatus (strain ATCC 33912 / PCC 7942 / FACHB-805) (Anacystis nidulans R2)).